The following is a 1330-amino-acid chain: MATEIGSPPRFFHMPRFQHQAPRQLFYKRPDFAQQQAMQQLTFDGKRMRKAVNRKTIDYNPSVIKYLENRIWQRDQRDMRAIQPDAGYYNDLVPPIGMLNNPMNAVTTKFVRTSTNKVKCPVFVVRWTPEGRRLVTGASSGEFTLWNGLTFNFETILQAHDSPVRAMTWSHNDMWMLTADHGGYVKYWQSNMNNVKMFQAHKEAIREASFSPTDNKFATCSDDGTVRIWDFLRCHEERILRGHGADVKCVDWHPTKGLVVSGSKDSQQPIKFWDPKTGQSLATLHAHKNTVMEVKLNLNGNWLLTASRDHLCKLFDIRNLKEELQVFRGHKKEATAVAWHPVHEGLFASGGSDGSLLFWHVGVEKEVGGMEMAHEGMIWSLAWHPLGHILCSGSNDHTSKFWTRNRPGDKMRDRYNLNLLPGMSEDGVEYDDLEPNSLAVIPGMGIPEQLKLAMEQEQMGKDESSEIEMTIPGLDWGMEEVMQKDQKKVPQKKVPYAKPIPAQFQQAWMQNKVPIPAPNEVLNDRKEDIKLEEKKKTQAEIEQEMATLQYTNPQLLEQLKIERLAQKQADQIQPPPSSGTPLLGPQPFSGQGPISQIPQGFQQPHPSQQMPLVPQMGPPGPQGQFRAPGPQGQMGPQGPPMHQGGGGPQGFMGPQGPQGPPQGLPRPQDMHGPQGMQRHPGPHGPLGPQGPPGPQGSSGPQGHMGPQGPPGPQGHIGPQGPPASQGHMGPQGPPGTQGMQGPPGPRGMQGPPHPHGIQGGPASQGIQGPLMGLNPRGMQGPPGPRENQGPAPQGLMIGHPPQEMRGPHPPSGLLGHGPQEMRGPQEMRGMQGPPPQGSMLGPPQELRGPSGSQGQQGPPQGSLGPPPQGGMQGPPGPQGQQNPARGPHPSQGPIPFQQQKAPLLGDGPRAPFNQEGQSTGPPPLIPGLGQQGAQGRIPPLNPGQGPGPNKGDTRGPPNHHLGPMSERRHEQSGGPEHGPDRGPFRGGQDCRGPPDRRGSHPDFPDDFRPDDFHPDKRFGHRLREFEGRGGPLPQEEKWRRGGPGPPFPPDHREFNEGDGRGAARGPPGAWEGRRPGDDRFPRDPDDPRFRGRREESFRRGAPPRHEGRAPPRGRDNFPGPDDFGPEEGFDASDEAARGRDLRGRGRGTPRGGSRKCLLPTPDEFPRFEGGRKPDSWDGNREPGPGHEHFRDAPRPDHPPHDGHSPASRERSSSLQGMDMASLPPRKRPWHDGSGTSEHREMEAQGGPSEDRGSKGRGGPGPSQRVPKSGRSSSLDGDHHDGYHRDEPFGGPPGSSSSSRGARSGSNWGRGSNMNSGPPRRGTSRGSGRGR.

An N-acetylalanine modification is found at Ala2. At Ser7 the chain carries Phosphoserine. Position 46 is an N6-acetyllysine (Lys46). WD repeat units lie at residues 117-156, 159-198, 200-239, 242-283, 286-325, 329-369, and 373-412; these read KVKCPVFVVRWTPEGRRLVTGASSGEFTLWNGLTFNFETI, AHDSPVRAMTWSHNDMWMLTADHGGYVKYWQSNMNNVKMF, AHKEAIREASFSPTDNKFATCSDDGTVRIWDFLRCHEERI, GHGA…SLAT, AHKNTVMEVKLNLNGNWLLTASRDHLCKLFDIRNLKEELQ, GHKK…EVGG, and AHEGMIWSLAWHPLGHILCSGSNDHTSKFWTRNRPGDKMR. Glycyl lysine isopeptide (Lys-Gly) (interchain with G-Cter in SUMO2) cross-links involve residues Lys526, Lys530, and Lys560. The interval 566 to 1330 is disordered; that stretch reads QKQADQIQPP…GTSRGSGRGR (765 aa). Residues 588 to 607 are compositionally biased toward polar residues; that stretch reads FSGQGPISQIPQGFQQPHPS. Residues 617–769 enclose the Collagen-like domain; sequence GPPGPQGQFR…GPASQGIQGP (153 aa). The segment covering 622–642 has biased composition (low complexity); the sequence is QGQFRAPGPQGQMGPQGPPMH. Residues 682–694 show a composition bias toward pro residues; it reads PHGPLGPQGPPGP. Low complexity-rich tracts occupy residues 695-706 and 725-750; these read QGSSGPQGHMGP and QGHMGPQGPPGTQGMQGPPGPRGMQG. An Omega-N-methylarginine modification is found at Arg776. Residues 848-863 show a composition bias toward low complexity; sequence GPSGSQGQQGPPQGSL. Asymmetric dimethylarginine is present on Arg909. The span at 926–935 shows a compositional bias: low complexity; that stretch reads PGLGQQGAQG. Composition is skewed to basic and acidic residues over residues 965-983 and 992-1027; these read SERRHEQSGGPEHGPDRGP and GPPDRRGSHPDFPDDFRPDDFHPDKRFGHRLREFEG. Position 981 is an omega-N-methylarginine (Arg981). Position 1028 is an omega-N-methylarginine (Arg1028). Composition is skewed to basic and acidic residues over residues 1049–1061 and 1071–1115; these read PDHREFNEGDGRG and EGRR…RGRD. Positions 1123–1133 are enriched in acidic residues; sequence FGPEEGFDASD. Composition is skewed to basic and acidic residues over residues 1134–1143, 1163–1211, and 1236–1253; these read EAARGRDLRG, EFPR…RERS, and SEHREMEAQGGPSEDRGS. Ser1204 carries the phosphoserine modification. Arg1256 is modified (omega-N-methylarginine). Residues 1275-1287 show a composition bias toward basic and acidic residues; it reads DGDHHDGYHRDEP. The span at 1293–1323 shows a compositional bias: low complexity; the sequence is GSSSSSRGARSGSNWGRGSNMNSGPPRRGTS. Position 1309 is an asymmetric dimethylarginine; alternate (Arg1309). At Arg1309 the chain carries Omega-N-methylarginine; alternate.

This sequence belongs to the WD repeat WDR33 family. As to quaternary structure, component of the cleavage and polyadenylation specificity factor (CPSF) module of the pre-mRNA 3'-end processing complex. Interacts with CPSF3/CPSF73. As to expression, most highly expressed in testis.

It localises to the nucleus. Essential for both cleavage and polyadenylation of pre-mRNA 3' ends. This is pre-mRNA 3' end processing protein WDR33 (Wdr33) from Mus musculus (Mouse).